The sequence spans 427 residues: Carboxyl-terminal-processing protease (427 aa).

The signal sequence occupies residues 1 to 31 (MGKRTRRFWALAFSLLMGALIYLGNTPSALA). The 83-residue stretch at 104 to 186 (NLQVTTTGEL…TKVSLEILSA (83 aa)) folds into the PDZ domain. Catalysis depends on charge relay system residues S313, D324, and K338.

This sequence belongs to the peptidase S41A family.

The protein localises to the cellular thylakoid lumen. It carries out the reaction The enzyme shows specific recognition of a C-terminal tripeptide, Xaa-Yaa-Zaa, in which Xaa is preferably Ala or Leu, Yaa is preferably Ala or Tyr, and Zaa is preferably Ala, but then cleaves at a variable distance from the C-terminus. A typical cleavage is -Ala-Ala-|-Arg-Ala-Ala-Lys-Glu-Asn-Tyr-Ala-Leu-Ala-Ala.. Functionally, cleavage of the 16 C-terminal residues from the D1 precursor of photosystem II (PSII). This proteolytic processing is necessary to allow the light-driven assembly of the oxygen-evolving cluster (a tetranuclear manganese), which is responsible for photosynthetic water oxidation. This Synechocystis sp. (strain ATCC 27184 / PCC 6803 / Kazusa) protein is Carboxyl-terminal-processing protease (ctpA).